Reading from the N-terminus, the 554-residue chain is Undecaprenyl phosphate-alpha-4-amino-4-deoxy-L-arabinose arabinosyl transferase (554 aa).

11 helical membrane passes run leucine 4–valine 24, phenylalanine 87–leucine 107, valine 115–valine 135, phenylalanine 178–isoleucine 198, leucine 206–leucine 226, tyrosine 262–phenylalanine 282, glutamate 293–glycine 313, leucine 315–threonine 335, valine 351–leucine 371, glutamine 384–leucine 404, and alanine 414–valine 434.

The protein belongs to the glycosyltransferase 83 family.

Its subcellular location is the cell inner membrane. The enzyme catalyses 4-amino-4-deoxy-alpha-L-arabinopyranosyl di-trans,octa-cis-undecaprenyl phosphate + lipid IVA = lipid IIA + di-trans,octa-cis-undecaprenyl phosphate.. The protein operates within lipopolysaccharide metabolism; 4-amino-4-deoxy-beta-L-arabinose-lipid A biosynthesis. In terms of biological role, catalyzes the transfer of the L-Ara4N moiety of the glycolipid undecaprenyl phosphate-alpha-L-Ara4N to lipid A. The modified arabinose is attached to lipid A and is required for resistance to polymyxin and cationic antimicrobial peptides. This Yersinia pseudotuberculosis serotype O:1b (strain IP 31758) protein is Undecaprenyl phosphate-alpha-4-amino-4-deoxy-L-arabinose arabinosyl transferase.